Reading from the N-terminus, the 153-residue chain is Deoxyuridine 5'-triphosphate nucleotidohydrolase (153 aa).

Substrate contacts are provided by residues 71-73 (RSG), Asn-84, 88-90 (TID), and Lys-98.

Belongs to the dUTPase family. It depends on Mg(2+) as a cofactor.

The enzyme catalyses dUTP + H2O = dUMP + diphosphate + H(+). It functions in the pathway pyrimidine metabolism; dUMP biosynthesis; dUMP from dCTP (dUTP route): step 2/2. Functionally, this enzyme is involved in nucleotide metabolism: it produces dUMP, the immediate precursor of thymidine nucleotides and it decreases the intracellular concentration of dUTP so that uracil cannot be incorporated into DNA. The polypeptide is Deoxyuridine 5'-triphosphate nucleotidohydrolase (Wolbachia pipientis wMel).